Consider the following 308-residue polypeptide: Transcription factor zip-2 (308 aa).

Residues 217-229 (QSSSSSTVETTIT) show a composition bias toward polar residues. The interval 217–277 (QSSSSSTVET…RESKEERERL (61 aa)) is disordered. Residues 242-305 (SSDYRHKRDK…EDYKRLVMMF (64 aa)) enclose the bZIP domain. Positions 246–276 (RHKRDKNNLASQKSRQKRQAKIRESKEERER) are basic motif. Positions 266–277 (KIRESKEERERL) are enriched in basic and acidic residues. A leucine-zipper region spans residues 277–291 (LEKRKVQLQAMVLTL).

The protein belongs to the bZIP family. C/EBP subfamily. As to expression, expressed in the pharynx and throughout the intestine.

Its subcellular location is the nucleus. Functionally, transcription factor that binds to the promoter and the enhancer regions of target genes. May act together with the bZIP transcription factor, cebp-2. Involved in responding to mitochondrial damage. Plays a role in the delay of age-associated mitochondrial fragmentation and muscle decline. Has a protective role in response to infection by the Gram-negative bacterium P.aeruginosa. Required to prevent P.aeruginosa ToxA-mediated lethality. Required for the activation of several infection response genes including irg-1 and irg-2 following P.aeruginosa infection; target gene activation may involve effects of the bacterial toxin, ToxA, and perhaps other toxins. The protein is Transcription factor zip-2 of Caenorhabditis elegans.